The chain runs to 719 residues: MQYSIEINKNTEIFDIDKVAKQAAGAVLMRQGKSVVLATVAREEKQVEEDFLPLTVQYIEKAYAAGKIPGGYVKRETKPSDAETLTARIIDRSLRPLFPKGYAYPTQIVVMVLSADPKVDLQVMSLNAASVALYLSDIPMKAPVCGVRIGKIDGNFILNPNNEELQNSTLDLYVAGVKDELLMIEMRALPDQKENEIFIEAPYADVLTQTTSQNMNELSEDEILEALNLAQKAILNGSNAYEEAFSKHKKNSQIELKNEIEHPEILAFIENNFQKQIKEAINQMAKSERASELNKIAKEILNLEITKDWSEESVLNTLAKVKRKLIREQILNEGKRADGRSLNEVRPISIETNILPNAHGSCLFTRGQTQALVVATLGGENDSQMIDLLTEKNPISERFMVNYNFPGFSVGEASPIKAPGRRELGHGNLAKRALYPSVDENYPYVIRLVSEILESNGSSSMATVCGGSLALKAAGVPSLKLVAGVAMGLIFEDNKYAVLTDIMGLEDHDGDMDFKVAGSKDGVTALQMDIKLGGIDQEILKQALYQAKEGRIHILNIMEEAAKEIIVNEEVLPKLELFSVDPSKIVDIIGQAGKTIKEIVEKFGVSIDLDREKGEVKIAGSQNEQIKAAKDYIINITSSQKGTKKGPKDKDISGFELGQEFQGIVKKIAPFGAFVELKNGVDGLLHSSKIKHLNLSENQSLKVKISEIKNGKISVDLCE.

Positions 507 and 513 each coordinate Mg(2+). The region spanning 573–633 (PKLELFSVDP…EQIKAAKDYI (61 aa)) is the KH domain. Residues 658-719 (GQEFQGIVKK…NGKISVDLCE (62 aa)) form the S1 motif domain.

Belongs to the polyribonucleotide nucleotidyltransferase family. Mg(2+) serves as cofactor.

Its subcellular location is the cytoplasm. It catalyses the reaction RNA(n+1) + phosphate = RNA(n) + a ribonucleoside 5'-diphosphate. Functionally, involved in mRNA degradation. Catalyzes the phosphorolysis of single-stranded polyribonucleotides processively in the 3'- to 5'-direction. The polypeptide is Polyribonucleotide nucleotidyltransferase (Campylobacter jejuni subsp. jejuni serotype O:2 (strain ATCC 700819 / NCTC 11168)).